Reading from the N-terminus, the 852-residue chain is Zinc finger protein 484 (852 aa).

One can recognise a KRAB domain in the interval 8-78; sequence VSFKDVTVDF…DGEIPSQSRP (71 aa). Residue K156 forms a Glycyl lysine isopeptide (Lys-Gly) (interchain with G-Cter in SUMO2) linkage. Residues 223–245 form a C2H2-type 1; degenerate zinc finger; the sequence is CECNQCGKPLHHKQALIQQQKIH. A C2H2-type 2; degenerate zinc finger spans residues 279 to 301; it reads HECHECEAVFTQKSQLDGSQRVY. Residues 328–350 form a C2H2-type 3; degenerate zinc finger; the sequence is YKCSDYGRAFIQKSDLFRCQRIH. The C2H2-type 4; degenerate zinc-finger motif lies at 356–378; the sequence is YEYSECEKNLPQNSNLNIHKKIH. 15 C2H2-type zinc fingers span residues 384-406, 412-434, 440-462, 468-490, 496-518, 524-546, 552-574, 580-602, 608-630, 636-658, 664-686, 692-714, 720-742, 748-770, and 776-798; these read FECT…QKIH, YVCT…ERIH, YECS…QRIH, FICS…QKIH, YICT…QKIH, YKCS…QKCH, YECS…QQIH, YRCA…QKIH, YKCS…QQSH, YICN…RRIH, YECS…HRIH, and YICA…QKIH. Residue K816 forms a Glycyl lysine isopeptide (Lys-Gly) (interchain with G-Cter in SUMO2) linkage.

This sequence belongs to the krueppel C2H2-type zinc-finger protein family.

It localises to the nucleus. May be involved in transcriptional regulation. In Homo sapiens (Human), this protein is Zinc finger protein 484 (ZNF484).